A 193-amino-acid chain; its full sequence is MISKYNRPMENLSNLDYSSYLKGWIRTVPNWPQQGVMFRDITPLLQNPKTFRMLIDIYVHRYMMEKVDLVAGLDARGFIIGSVLAYELNVGFVPIRKKGKLPFTTVEEEYELEYGNAAVEMHTDACKPGDRVILIDDLVATGGTMMAGYKLLKRMGADVLEAAAIIELPELGGGQLVRDGGLDLFTVCSYEGH.

It belongs to the purine/pyrimidine phosphoribosyltransferase family. Homodimer.

It localises to the cytoplasm. It catalyses the reaction AMP + diphosphate = 5-phospho-alpha-D-ribose 1-diphosphate + adenine. It participates in purine metabolism; AMP biosynthesis via salvage pathway; AMP from adenine: step 1/1. Functionally, catalyzes a salvage reaction resulting in the formation of AMP, that is energically less costly than de novo synthesis. The sequence is that of Adenine phosphoribosyltransferase from Chromobacterium violaceum (strain ATCC 12472 / DSM 30191 / JCM 1249 / CCUG 213 / NBRC 12614 / NCIMB 9131 / NCTC 9757 / MK).